A 108-amino-acid polypeptide reads, in one-letter code: MWDETVAGPKPEHGLGRLRNKITTQPLDIKGVGEGSSSKTVAAVAGSPGTPTTPGSARKENVWRSVFHPGSNIATRGMGTNLFDKPSHPNSPTVYDWLYSDDTRSKHR.

Positions 28–59 are disordered; sequence DIKGVGEGSSSKTVAAVAGSPGTPTTPGSARK. Ser-47 carries the post-translational modification Phosphoserine. Thr-50 is modified (phosphothreonine).

Belongs to the DRM1/ARP family. In terms of tissue distribution, expressed mainly in the low bolt.

The protein is Dormancy-associated protein homolog 1 of Arabidopsis thaliana (Mouse-ear cress).